Here is a 409-residue protein sequence, read N- to C-terminus: MTLSSAGGSRSHRHNGGHSERDVEIRILKDKVRSLTKEKISLQKELEYYKNEITKLLSPPYIEAVVLEVIDDNRVVVKSSTGPNLIVNVAAGVDARSLKPGAIVALNNRGSTIVDVLPGRYDPLVKAMEVEERPKVFFKDVGGLEEQIREIYEAVVLPIKNPHLFRELGIDPPKGVLLHGPPGTGKTLLAKAVAGETEATFIRVVGSELVNKFIGEGARLVREIFRLAREKAPSILFIDEIDAIASKRVDIGTSGDREVQRTMLQLLAELDGFDPLDNVKVIAATNRLDLIDPAVLRPGRFDRIIEVPLPSLRGRLEILGIHTRKAKMAPDVDLEAIAKLTEGFSGADLKAVVVEAGYNAIRRGSRVITMDDMIKAVEKVKAALDKRGGGDPFIRAQQKSGDDTIATVI.

Positions 1–22 (MTLSSAGGSRSHRHNGGHSERD) are disordered. The stretch at 23-58 (VEIRILKDKVRSLTKEKISLQKELEYYKNEITKLLS) forms a coiled coil. ATP contacts are provided by residues 183–188 (GTGKTL) and His322.

It belongs to the AAA ATPase family. In terms of assembly, homohexamer. The hexameric complex has a two-ring architecture resembling a top hat that caps the 20S proteasome core at one or both ends. Upon ATP-binding, the C-terminus of PAN interacts with the alpha-rings of the proteasome core by binding to the intersubunit pockets.

Its subcellular location is the cytoplasm. ATPase which is responsible for recognizing, binding, unfolding and translocation of substrate proteins into the archaeal 20S proteasome core particle. Is essential for opening the gate of the 20S proteasome via an interaction with its C-terminus, thereby allowing substrate entry and access to the site of proteolysis. Thus, the C-termini of the proteasomal ATPase function like a 'key in a lock' to induce gate opening and therefore regulate proteolysis. Unfolding activity requires energy from ATP hydrolysis, whereas ATP binding alone promotes ATPase-20S proteasome association which triggers gate opening, and supports translocation of unfolded substrates. This chain is Proteasome-activating nucleotidase, found in Aeropyrum pernix (strain ATCC 700893 / DSM 11879 / JCM 9820 / NBRC 100138 / K1).